A 472-amino-acid polypeptide reads, in one-letter code: Adenosylhomocysteinase (472 aa).

Substrate contacts are provided by T62, D137, and E197. Residue 198–200 (TTT) coordinates NAD(+). Positions 227 and 231 each coordinate substrate. NAD(+) contacts are provided by residues N232, 261–266 (GYGDVG), E284, N319, 340–342 (IGH), and N385.

The protein belongs to the adenosylhomocysteinase family. The cofactor is NAD(+).

It is found in the cytoplasm. The catalysed reaction is S-adenosyl-L-homocysteine + H2O = L-homocysteine + adenosine. It participates in amino-acid biosynthesis; L-homocysteine biosynthesis; L-homocysteine from S-adenosyl-L-homocysteine: step 1/1. Functionally, may play a key role in the regulation of the intracellular concentration of adenosylhomocysteine. The sequence is that of Adenosylhomocysteinase from Bordetella bronchiseptica (strain ATCC BAA-588 / NCTC 13252 / RB50) (Alcaligenes bronchisepticus).